The following is a 184-amino-acid chain: Oligoribonuclease (184 aa).

The 164-residue stretch at 7 to 170 folds into the Exonuclease domain; the sequence is LIWIDLEMTG…DDIRESVAEL (164 aa). The active site involves tyrosine 128.

This sequence belongs to the oligoribonuclease family.

It is found in the cytoplasm. Functionally, 3'-to-5' exoribonuclease specific for small oligoribonucleotides. The chain is Oligoribonuclease from Baumannia cicadellinicola subsp. Homalodisca coagulata.